Here is a 353-residue protein sequence, read N- to C-terminus: Probable D-xylulose reductase A (353 aa).

The Zn(2+) site is built by cysteine 42, histidine 67, and glutamate 68. Position 177–182 (177–182) interacts with NAD(+); sequence GAGPVG.

Belongs to the zinc-containing alcohol dehydrogenase family. Requires Zn(2+) as cofactor.

It carries out the reaction xylitol + NAD(+) = D-xylulose + NADH + H(+). It participates in carbohydrate degradation; L-arabinose degradation via L-arabinitol; D-xylulose 5-phosphate from L-arabinose (fungal route): step 4/5. In terms of biological role, xylitol dehydrogenase which catalyzes the conversion of xylitol to D-xylulose. Xylose is a major component of hemicelluloses such as xylan. Most fungi utilize D-xylose via three enzymatic reactions, xylose reductase (XR), xylitol dehydrogenase (XDH), and xylulokinase, to form xylulose 5-phosphate, which enters pentose phosphate pathway. The protein is Probable D-xylulose reductase A (xdhA) of Aspergillus terreus (strain NIH 2624 / FGSC A1156).